The primary structure comprises 393 residues: Endoplasmic reticulum junction formation protein lunapark-A (393 aa).

Residues 1-45 (MGAVVSRWRAKPSTVEVLEGLDKDIQVLEEYREKNHKQLKLWVYR) are Cytoplasmic-facing. The helical transmembrane segment at 46-66 (LLLYSALLYLMACAVVYAWYI) threads the bilayer. Over 67 to 69 (PER) the chain is Lumenal. The helical transmembrane segment at 70 to 90 (MIGKLIVASPFLLFPLLIWLL) threads the bilayer. At 91-393 (RKLLIILYNK…EQDVSAMEVE (303 aa)) the chain is on the cytoplasmic side. The stretch at 95-130 (IILYNKRTERNNEKLEELKAEKKKILEQVMETETYK) forms a coiled coil. The tract at residues 146–209 (KLELETQPIG…PPEKGLSAST (64 aa)) is disordered. Pro residues predominate over residues 176–190 (TGRPPPVPVPGPSVP). Residues 269 to 294 (CQQCLSHNGMALKEEFEYIAFRCAYC) form a C4-type; plays a role in ER morphology zinc finger. A disordered region spans residues 314–393 (AAEAKTSQDP…EQDVSAMEVE (80 aa)). Basic and acidic residues-rich tracts occupy residues 340-353 (ESKE…KAGD) and 364-383 (EEMK…KSDG).

It belongs to the lunapark family. As to quaternary structure, homodimer; homodimerization requires the C4-type zinc finger motif and decreases during mitosis in a phosphorylation-dependent manner. In terms of processing, phosphorylated. Phosphorylation occurs during interphase. Phosphorylation also occurs during mitosis; these phosphorylations reduce both its homodimerization and the ER three-way tubular junction formation.

It is found in the endoplasmic reticulum membrane. In terms of biological role, endoplasmic reticulum (ER)-shaping membrane protein that plays a role in determining ER morphology. Involved in the stabilization of nascent three-way ER tubular junctions within the ER network. May also play a role as a curvature-stabilizing protein within three-way ER tubular junction network. The polypeptide is Endoplasmic reticulum junction formation protein lunapark-A (lnpka) (Danio rerio (Zebrafish)).